Consider the following 775-residue polypeptide: 5-methyltetrahydropteroyltriglutamate--homocysteine methyltransferase (775 aa).

5-methyltetrahydropteroyltri-L-glutamate is bound by residues 16 to 19 and Lys-115; that span reads REMK. Residues 435–437 and Glu-488 each bind L-homocysteine; that span reads IGS. Residues 435–437 and Glu-488 contribute to the L-methionine site; that span reads IGS. Residues 519 to 520 and Trp-565 each bind 5-methyltetrahydropteroyltri-L-glutamate; that span reads RC. Asp-603 provides a ligand contact to L-homocysteine. Asp-603 serves as a coordination point for L-methionine. Position 609 (Glu-609) interacts with 5-methyltetrahydropteroyltri-L-glutamate. His-645, Cys-647, and Glu-669 together coordinate Zn(2+). Residue His-698 is the Proton donor of the active site. Cys-730 lines the Zn(2+) pocket.

It belongs to the vitamin-B12 independent methionine synthase family. It depends on Zn(2+) as a cofactor.

It catalyses the reaction 5-methyltetrahydropteroyltri-L-glutamate + L-homocysteine = tetrahydropteroyltri-L-glutamate + L-methionine. The protein operates within amino-acid biosynthesis; L-methionine biosynthesis via de novo pathway; L-methionine from L-homocysteine (MetE route): step 1/1. Catalyzes the transfer of a methyl group from 5-methyltetrahydrofolate to homocysteine resulting in methionine formation. The chain is 5-methyltetrahydropteroyltriglutamate--homocysteine methyltransferase from Coxiella burnetii (strain CbuK_Q154) (Coxiella burnetii (strain Q154)).